A 384-amino-acid polypeptide reads, in one-letter code: Tetraacyldisaccharide 4'-kinase (384 aa).

72-79 (TAGGTGKT) lines the ATP pocket.

Belongs to the LpxK family.

The enzyme catalyses a lipid A disaccharide + ATP = a lipid IVA + ADP + H(+). It participates in glycolipid biosynthesis; lipid IV(A) biosynthesis; lipid IV(A) from (3R)-3-hydroxytetradecanoyl-[acyl-carrier-protein] and UDP-N-acetyl-alpha-D-glucosamine: step 6/6. In terms of biological role, transfers the gamma-phosphate of ATP to the 4'-position of a tetraacyldisaccharide 1-phosphate intermediate (termed DS-1-P) to form tetraacyldisaccharide 1,4'-bis-phosphate (lipid IVA). This is Tetraacyldisaccharide 4'-kinase from Halothermothrix orenii (strain H 168 / OCM 544 / DSM 9562).